The chain runs to 207 residues: Pyridoxine/pyridoxamine 5'-phosphate oxidase (207 aa).

FMN contacts are provided by residues 53-58, 68-69, Lys75, and Gln97; these read RMVLLK and YT. Residue Lys58 coordinates substrate. Residues Tyr115, Arg119, and Ser123 each contribute to the substrate site. Residues 132-133 and Trp177 each bind FMN; that span reads QS. 183–185 provides a ligand contact to substrate; the sequence is RLH. Arg187 provides a ligand contact to FMN.

The protein belongs to the pyridoxamine 5'-phosphate oxidase family. In terms of assembly, homodimer. Requires FMN as cofactor.

It carries out the reaction pyridoxamine 5'-phosphate + O2 + H2O = pyridoxal 5'-phosphate + H2O2 + NH4(+). The catalysed reaction is pyridoxine 5'-phosphate + O2 = pyridoxal 5'-phosphate + H2O2. It functions in the pathway cofactor metabolism; pyridoxal 5'-phosphate salvage; pyridoxal 5'-phosphate from pyridoxamine 5'-phosphate: step 1/1. Its pathway is cofactor metabolism; pyridoxal 5'-phosphate salvage; pyridoxal 5'-phosphate from pyridoxine 5'-phosphate: step 1/1. Its function is as follows. Catalyzes the oxidation of either pyridoxine 5'-phosphate (PNP) or pyridoxamine 5'-phosphate (PMP) into pyridoxal 5'-phosphate (PLP). The protein is Pyridoxine/pyridoxamine 5'-phosphate oxidase of Bartonella henselae (strain ATCC 49882 / DSM 28221 / CCUG 30454 / Houston 1) (Rochalimaea henselae).